We begin with the raw amino-acid sequence, 283 residues long: Cell differentiation protein rcd1 (283 aa).

Belongs to the CNOT9 family.

Its function is as follows. A differentiation-controlling factor that is essential for the onset of sexual development. Induces ste11 when sexual development is invoked through nitrogen starvation. This chain is Cell differentiation protein rcd1 (rcd1), found in Schizosaccharomyces pombe (strain 972 / ATCC 24843) (Fission yeast).